Reading from the N-terminus, the 284-residue chain is D-tagatose-1,6-bisphosphate aldolase subunit GatY (284 aa).

Aspartate 82 functions as the Proton donor in the catalytic mechanism. Residues histidine 83 and histidine 180 each contribute to the Zn(2+) site. Dihydroxyacetone phosphate is bound at residue glycine 181. Histidine 208 is a binding site for Zn(2+). Dihydroxyacetone phosphate is bound by residues 209–211 and 230–233; these read GAS and NVAT.

The protein belongs to the class II fructose-bisphosphate aldolase family. TagBP aldolase GatY subfamily. In terms of assembly, forms a complex with GatZ. Requires Zn(2+) as cofactor.

The catalysed reaction is D-tagatofuranose 1,6-bisphosphate = D-glyceraldehyde 3-phosphate + dihydroxyacetone phosphate. It participates in carbohydrate metabolism; D-tagatose 6-phosphate degradation; D-glyceraldehyde 3-phosphate and glycerone phosphate from D-tagatose 6-phosphate: step 2/2. Functionally, catalytic subunit of the tagatose-1,6-bisphosphate aldolase GatYZ, which catalyzes the reversible aldol condensation of dihydroxyacetone phosphate (DHAP or glycerone-phosphate) with glyceraldehyde 3-phosphate (G3P) to produce tagatose 1,6-bisphosphate (TBP). Requires GatZ subunit for full activity and stability. Is involved in the catabolism of galactitol. This chain is D-tagatose-1,6-bisphosphate aldolase subunit GatY (gatY), found in Escherichia coli.